The chain runs to 112 residues: MYB-like transcription factor ETC2 (112 aa).

The region spanning Thr-41 to Trp-78 is the Myb-like domain.

As to quaternary structure, interacts with GL3. Expressed in stomatal guard mother cells, young stomata and trichomes of young leaves, and inflorescences.

The protein resides in the nucleus. Its function is as follows. MYB-type transcription factor involved in epidermal cell fate specification. Acts as a negative regulator of trichome development, by mediating lateral inhibition. Promotes the formation of hair developing cells in H position in root epidermis, probably by inhibiting non-hair cell formation. The protein is MYB-like transcription factor ETC2 (ETC2) of Arabidopsis thaliana (Mouse-ear cress).